A 161-amino-acid chain; its full sequence is DNA-directed RNA polymerase 18 kDa subunit (161 aa).

It belongs to the poxviridae DNA-directed RNA polymerase 18 kDa subunit family. In terms of assembly, the DNA-dependent RNA polymerase used for intermediate and late genes expression consists of eight subunits Rpo30/OPG66, Rpo7/OPG90, Rpo22/OPG103, Rpo147/OPG105, Rpo18/OPG119, Rpo19/OPG131, Rpo132/OPG151 and Rpo35/OPG156. The same holoenzyme, with the addition of the transcription-specificity factor OPG109, is used for early gene expression.

The protein localises to the virion. It catalyses the reaction RNA(n) + a ribonucleoside 5'-triphosphate = RNA(n+1) + diphosphate. In terms of biological role, part of the DNA-dependent RNA polymerase which catalyzes the transcription of viral DNA into RNA using the four ribonucleoside triphosphates as substrates. Responsible for the transcription of early, intermediate and late genes. DNA-dependent RNA polymerase associates with the early transcription factor (ETF), itself composed of OPG118 and OPG133, thereby allowing the early genes transcription. Late transcription, and probably also intermediate transcription, require newly synthesized RNA polymerase. The sequence is that of DNA-directed RNA polymerase 18 kDa subunit (OPG119) from Homo sapiens (Human).